The sequence spans 502 residues: UDP-N-acetylmuramate--L-alanine ligase (502 aa).

120-126 contributes to the ATP binding site; that stretch reads GTHGKTS.

It belongs to the MurCDEF family.

It localises to the cytoplasm. The enzyme catalyses UDP-N-acetyl-alpha-D-muramate + L-alanine + ATP = UDP-N-acetyl-alpha-D-muramoyl-L-alanine + ADP + phosphate + H(+). It participates in cell wall biogenesis; peptidoglycan biosynthesis. In terms of biological role, cell wall formation. The sequence is that of UDP-N-acetylmuramate--L-alanine ligase from Rhodococcus erythropolis (strain PR4 / NBRC 100887).